A 553-amino-acid chain; its full sequence is Zinc finger CCHC domain-containing protein 8 homolog (553 aa).

The residue at position 59 (S59) is a Phosphoserine. Residues 183–200 (SSCFNCGDTEHSLRDCTK) form a CCHC-type zinc finger. Phosphoserine is present on residues S292 and S347. The residue at position 356 (Y356) is a Phosphotyrosine. Residues 388–492 (LEEETEDPPL…APSTPFKASY (105 aa)) form a disordered region. Pro residues predominate over residues 395-409 (PPLPPSVPPPQPPPP). 2 positions are modified to phosphoserine: S421 and S423. 2 stretches are compositionally biased toward polar residues: residues 444–456 (ASHN…SKSP) and 473–485 (ESGN…SAPS).

This sequence belongs to the ZCCHC8 family.

The protein resides in the nucleus. It localises to the nucleoplasm. Its function is as follows. Scaffolding subunit of the trimeric nuclear exosome targeting (NEXT) complex, a complex that directs a subset of non-coding short-lived RNAs for exosomal degradation. The RNA exosome is fundamental for the degradation of RNA in eukaryotic nuclei. May be involved in pre-mRNA splicing. This is Zinc finger CCHC domain-containing protein 8 homolog from Drosophila melanogaster (Fruit fly).